The sequence spans 117 residues: DNA-directed RNA polymerase subunit omega (117 aa).

The span at 96–105 (KEEAEEEAKQ) shows a compositional bias: basic and acidic residues. Residues 96–117 (KEEAEEEAKQKNSRAAKAAAAE) form a disordered region. Low complexity predominate over residues 108 to 117 (SRAAKAAAAE).

It belongs to the RNA polymerase subunit omega family. The RNAP catalytic core consists of 2 alpha, 1 beta, 1 beta' and 1 omega subunit. When a sigma factor is associated with the core the holoenzyme is formed, which can initiate transcription.

The catalysed reaction is RNA(n) + a ribonucleoside 5'-triphosphate = RNA(n+1) + diphosphate. Promotes RNA polymerase assembly. Latches the N- and C-terminal regions of the beta' subunit thereby facilitating its interaction with the beta and alpha subunits. The sequence is that of DNA-directed RNA polymerase subunit omega from Lactococcus lactis subsp. cremoris (strain SK11).